The following is a 276-amino-acid chain: MGIKKFKPTSPGRRQMTVSTFEEITTSTPEKSLLAPLSKKAGRNNQGRITVRHQGGGHKRKYRIIDFKRNKDGIIGRVATIEYDPNRSANIALINYADGEKRYIIAPHNLKVGDQIVSGADADIKIGNALPMEKIPVGTTIHNIELKPGKGGQLVRAAGTSAQLLGRDGEFVIVRLSSGETRRIHNVCRATIGQVGNLDHELLNIGKAGRSRWLGIRPTVRGSVMNPNDHPHGGGEGRAPIGRKAPVTPWGKPTLGLKTRKKKNKSDQYIIRRRKK.

Positions 221 to 276 are disordered; sequence RGSVMNPNDHPHGGGEGRAPIGRKAPVTPWGKPTLGLKTRKKKNKSDQYIIRRRKK.

It belongs to the universal ribosomal protein uL2 family. Part of the 50S ribosomal subunit. Forms a bridge to the 30S subunit in the 70S ribosome.

One of the primary rRNA binding proteins. Required for association of the 30S and 50S subunits to form the 70S ribosome, for tRNA binding and peptide bond formation. It has been suggested to have peptidyltransferase activity; this is somewhat controversial. Makes several contacts with the 16S rRNA in the 70S ribosome. The sequence is that of Large ribosomal subunit protein uL2 from Brevibacillus brevis (strain 47 / JCM 6285 / NBRC 100599).